A 72-amino-acid polypeptide reads, in one-letter code: Dermaseptin AA-3-4 (72 aa).

The first 22 residues, 1 to 22 (MAFLKKSLFLVLFLGLVSLSIC), serve as a signal peptide directing secretion. Positions 23-43 (DEEKRENEDEEEQEDDEQSEE) are excised as a propeptide. Positions 24–45 (EEKRENEDEEEQEDDEQSEEKR) are disordered. Acidic residues predominate over residues 30-41 (EDEEEQEDDEQS).

Belongs to the frog skin active peptide (FSAP) family. Expressed by the skin glands.

It localises to the secreted. In terms of biological role, possesses a potent antimicrobial activity against Gram-positive and Gram-negative bacteria. Probably acts by disturbing membrane functions with its amphipathic structure. This is Dermaseptin AA-3-4 from Agalychnis annae (Blue-sided leaf frog).